The chain runs to 871 residues: Probable LRR receptor-like serine/threonine-protein kinase At1g51810 (871 aa).

The signal sequence occupies residues 1–20 (MERHCLFFVIFSLILHLVQA). At 21-512 (QDPIGFINLD…GRQIKSMTIP (492 aa)) the chain is on the extracellular side. N-linked (GlcNAc...) asparagine glycans are attached at residues N93, N179, N229, N283, N295, N396, N410, N439, N458, N463, and N489. LRR repeat units follow at residues 405-426 (IITSLNLSSSGLTGIIVLTIQN), 429-449 (NLQELDLSNNNLSGGVPEFLA), and 453-474 (SLLVINLSGNNLSGVVPQKLIE). The helical transmembrane segment at 513-533 (IVASIGSVVAFTVALMIFCVV) threads the bilayer. Topologically, residues 534-871 (RKNNPSNDEA…FGTEVAPMAR (338 aa)) are cytoplasmic. T568 carries the phosphothreonine modification. The 274-residue stretch at 577–850 (NNFQKILGKG…QVVFELKECL (274 aa)) folds into the Protein kinase domain. Residues 583–591 (LGKGGFGIV) and K605 each bind ATP. Position 650 is a phosphotyrosine (Y650). The active-site Proton acceptor is the D702. Phosphoserine is present on S736. Residues T737 and T742 each carry the phosphothreonine modification. Y750 carries the post-translational modification Phosphotyrosine.

The protein belongs to the protein kinase superfamily. Ser/Thr protein kinase family.

The protein localises to the membrane. It carries out the reaction L-seryl-[protein] + ATP = O-phospho-L-seryl-[protein] + ADP + H(+). It catalyses the reaction L-threonyl-[protein] + ATP = O-phospho-L-threonyl-[protein] + ADP + H(+). This Arabidopsis thaliana (Mouse-ear cress) protein is Probable LRR receptor-like serine/threonine-protein kinase At1g51810.